The sequence spans 362 residues: HLA class I histocompatibility antigen, B alpha chain (362 aa).

The signal sequence occupies residues 1–24 (MLVMAPRTVLLLLSAALALTETWA). A VL9 epitope region spans residues 3–11 (VMAPRTVLL). The alpha-1 stretch occupies residues 25–114 (GSHSMRYFYT…LRGYYNQSEA (90 aa)). At 25–309 (GSHSMRYFYT…PSSQSTVPIV (285 aa)) the chain is on the extracellular side. Asn-87 serves as a coordination point for a peptide antigen. Residues 101–107 (SLRNLRG) carry the Bw6 motif motif. Tyr-108 is a binding site for a peptide antigen. The N-linked (GlcNAc...) asparagine glycan is linked to Asn-110. Positions 115 to 206 (GSHTLQSMYG…ENGKDKLERA (92 aa)) are alpha-2. An intrachain disulfide couples Cys-125 to Cys-188. A peptide antigen is bound by residues Thr-167, Lys-170, Glu-176, Tyr-183, and Tyr-195. The interval 207 to 298 (DPPKTHVTHH…GLPKPLTLRW (92 aa)) is alpha-3. Residues 209–295 (PKTHVTHHPI…QHEGLPKPLT (87 aa)) form the Ig-like C1-type domain. A disulfide bond links Cys-227 and Cys-283. Positions 299–309 (EPSSQSTVPIV) are connecting peptide. Residues 310–333 (GIVAGLAVLAVVVIGAVVAAVMCR) traverse the membrane as a helical segment. Residues 334 to 362 (RKSSGGKGGSYSQAACSDSAQGSDVSLTA) are Cytoplasmic-facing. Residues 337–362 (SGGKGGSYSQAACSDSAQGSDVSLTA) are disordered. The segment covering 346-362 (QAACSDSAQGSDVSLTA) has biased composition (polar residues).

Heterotrimer that consists of an alpha chain HLA-B, a beta chain B2M and a peptide (peptide-HLA-B-B2M). Early in biogenesis, HLA-B-B2M dimer interacts with the components of the peptide-loading complex composed of TAPBP, TAP1-TAP2, TAPBPL, PDIA3/ERP57 and CALR. Interacts with TAP1-TAP2 transporter via TAPBP; this interaction is obligatory for the loading of peptide epitopes delivered to the ER by TAP1-TAP2 transporter. Interacts with TAPBPL; TAPBPL binds peptide-free HLA-B-B2M complexes or those loaded with low affinity peptides, likely facilitating peptide exchange for higher affinity peptides. Only optimally assembled peptide-HLA-B-B2M trimer translocates to the surface of antigen-presenting cells, where it interacts with TCR and CD8 coreceptor on the surface of T cells. HLA-B (via polymorphic alpha-1 and alpha-2 domains) interacts with antigen-specific TCR (via CDR1, CDR2 and CDR3 domains). One HLA-B molecule (mainly via nonpolymorphic alpha-3 domain) interacts with one CD8A homodimer (via CDR-like loop); this interaction ensures peptide-HLA-B-B2M recognition by CD8-positive T cells only. Allele B*57:01 interacts (via Bw4 motif) with KIR3DL1 (via Ig-like C2-type domain); this interaction may interfere with peptide binding. Allele B*46:01 interacts with KIR2DL3. In terms of assembly, (Microbial infection) Interacts with HTLV-1 accessory protein p12I.

The protein localises to the cell membrane. It localises to the endoplasmic reticulum membrane. Antigen-presenting major histocompatibility complex class I (MHCI) molecule. In complex with B2M/beta 2 microglobulin displays primarily viral and tumor-derived peptides on antigen-presenting cells for recognition by alpha-beta T cell receptor (TCR) on HLA-B-restricted CD8-positive T cells, guiding antigen-specific T cell immune response to eliminate infected or transformed cells. May also present self-peptides derived from the signal sequence of secreted or membrane proteins, although T cells specific for these peptides are usually inactivated to prevent autoreactivity. Both the peptide and the MHC molecule are recognized by TCR, the peptide is responsible for the fine specificity of antigen recognition and MHC residues account for the MHC restriction of T cells. Typically presents intracellular peptide antigens of 8 to 13 amino acids that arise from cytosolic proteolysis via constitutive proteasome and IFNG-induced immunoproteasome. Can bind different peptides containing allele-specific binding motifs, which are mainly defined by anchor residues at position 2 and 9. In terms of biological role, allele B*07:02: Displays peptides sharing a common signature motif, namely a Pro residue at position 2 and mainly a Leu anchor residue at the C-terminus. Presents a long peptide (APRGPHGGAASGL) derived from the cancer-testis antigen CTAG1A/NY-ESO-1, eliciting a polyclonal CD8-positive T cell response against tumor cells. Presents viral epitopes derived from HIV-1 gag-pol (TPQDLNTML) and Nef (RPQVPLRPM). Presents an immunodominant epitope derived from SARS-CoV-2 N/nucleoprotein (SPRWYFYYL). Displays self-peptides including a peptide derived from the signal sequence of HLA-DPB1 (APRTVALTA). Functionally, allele B*08:01: Presents to CD8-positive T cells viral epitopes derived from EBV/HHV-4 EBNA3 (QAKWRLQTL), eliciting cytotoxic T cell response. Its function is as follows. Allele B*13:02: Presents multiple HIV-1 epitopes derived from gag (RQANFLGKI, GQMREPRGSDI), nef (RQDILDLWI), gag-pol (RQYDQILIE, GQGQWTYQI) and rev (LQLPPLERL), all having in common a Gln residue at position 2 and mainly hydrophobic amino acids Leu, Ile or Val at the C-terminus. Associated with successful control of HIV-1 infection. Allele B*18:01: Preferentially presents octomeric and nonameric peptides sharing a common motif, namely a Glu at position 2 and Phe or Tyr anchor residues at the C-terminus. Presents an EBV/HHV-4 epitope derived from BZLF1 (SELEIKRY). May present to CD8-positive T cells an antigenic peptide derived from MAGEA3 (MEVDPIGHLY), triggering an anti-tumor immune response. May display a broad repertoire of self-peptides with a preference for peptides derived from RNA-binding proteins. In terms of biological role, allele B*27:05: Presents to CD8-positive T cells immunodominant viral epitopes derived from HCV POLG (ARMILMTHF), HIV-1 gag (KRWIILGLNK), IAV NP (SRYWAIRTR), SARS-CoV-2 N/nucleoprotein (QRNAPRITF), EBV/HHV-4 EBNA4 (HRCQAIRKK) and EBV/HHV-4 EBNA6 (RRIYDLIEL), conferring longterm protection against viral infection. Can present self-peptides derived from cytosolic and nuclear proteins. All peptides carry an Arg at position 2. The peptide-bound form interacts with NK cell inhibitory receptor KIR3DL1 and inhibits NK cell activation in a peptide-specific way, being particularly sensitive to the nature of the amino acid side chain at position 8 of the antigenic peptide. KIR3DL1 fails to recognize HLA-B*27:05 in complex with B2M and EBV/HHV-4 EBNA6 (RRIYDLIEL) peptide, which can lead to increased activation of NK cells during infection. May present an altered repertoire of peptides in the absence of TAP1-TAP2 and TAPBPL. Functionally, allele B*40:01: Presents immunodominant viral epitopes derived from EBV/HHV-4 LMP2 (IEDPPFNSL) and SARS-CoV-2 N/nucleoprotein (MEVTPSGTWL), triggering memory CD8-positive T cell response. Displays self-peptides sharing a signature motif, namely a Glu at position 2 and a Leu anchor residue at the C-terminus. Its function is as follows. Allele B*41:01: Displays self-peptides sharing a signature motif, namely a Glu at position 2 and Ala or Pro anchor residues at the C-terminus. Allele B*44:02: Presents immunodominant viral epitopes derived from EBV/HHV-4 EBNA4 (VEITPYKPTW) and EBNA6 (AEGGVGWRHW, EENLLDFVRF), triggering memory CD8-positive T cell response. Displays self-peptides sharing a signature motif, namely a Glu at position 2 and Phe, Tyr or Trp anchor residues at the C-terminus. In terms of biological role, allele B*45:01: Displays self-peptides sharing a signature motif, namely a Glu at position 2 and Ala or Pro anchor residues at the C-terminus. Functionally, allele B*46:01: Preferentially presents nonameric peptides sharing a signature motif, namely Ala and Leu at position 2 and Tyr, Phe, Leu, or Met anchor residues at the C-terminus. The peptide-bound form interacts with KIR2DL3 and inhibits NK cell cytotoxic response in a peptide-specific way. Its function is as follows. Allele B*47:01: Displays self-peptides sharing a signature motif, namely an Asp at position 2 and Leu or Met anchor residues at the C-terminus. Allele B*49:01: Displays self-peptides sharing a signature motif, namely a Glu at position 2 and Ile or Val anchor residues at the C-terminus. In terms of biological role, allele B*50:01: Displays self-peptides sharing a signature motif, namely a Glu at position 2 and Ala or Pro anchor residues at the C-terminus. Functionally, allele B*51:01: Presents an octomeric HIV-1 epitope derived from gag-pol (TAFTIPSI) to the public TRAV17/TRBV7-3 TCR clonotype, strongly suppressing HIV-1 replication. Its function is as follows. Allele B*54:01: Displays peptides sharing a common signature motif, namely a Pro residue at position 2 and Ala anchor residue at the C-terminus. Allele B*55:01: Displays peptides sharing a common signature motif, namely a Pro residue at position 2 and Ala anchor residue at the C-terminus. In terms of biological role, allele B*56:01: Displays peptides sharing a common signature motif, namely a Pro residue at position 2 and Ala anchor residue at the C-terminus. Functionally, allele B*57:01: The peptide-bound form recognizes KIR3DL1 and inhibits NK cell cytotoxic response. Presents HIV gag peptides (immunodominant KAFSPEVIPMF and subdominant KALGPAATL epitopes) predominantly to CD8-positive T cell clones expressing a TRAV41-containing TCR, triggering HLA-B-restricted T cell responses. Its function is as follows. Allele B*67:01: Displays peptides sharing a common signature motif, namely a Pro residue at position 2 and Leu anchor residue at the C-terminus. The protein is HLA class I histocompatibility antigen, B alpha chain of Homo sapiens (Human).